The primary structure comprises 345 residues: Uroporphyrinogen decarboxylase (345 aa).

Residues 27–31 (RQAGR), Phe-46, Asp-76, Tyr-152, Ser-207, and His-320 contribute to the substrate site.

This sequence belongs to the uroporphyrinogen decarboxylase family. As to quaternary structure, homodimer.

The protein localises to the cytoplasm. The enzyme catalyses uroporphyrinogen III + 4 H(+) = coproporphyrinogen III + 4 CO2. The protein operates within porphyrin-containing compound metabolism; protoporphyrin-IX biosynthesis; coproporphyrinogen-III from 5-aminolevulinate: step 4/4. Functionally, catalyzes the decarboxylation of four acetate groups of uroporphyrinogen-III to yield coproporphyrinogen-III. The polypeptide is Uroporphyrinogen decarboxylase (Geobacillus thermodenitrificans (strain NG80-2)).